Consider the following 483-residue polypeptide: S-adenosylhomocysteine hydrolase-like protein 1 (483 aa).

Positions 1–56 are disordered; sequence MQEFTKFPTKTGRRSLSRSISQSSTDSYSSAASYTDSSDDEVSPREKQQTNSKGSS. A compositionally biased stretch (low complexity) spans 17-36; it reads SRSISQSSTDSYSSAASYTD. The tract at residues 18 to 45 is PEST; sequence RSISQSSTDSYSSAASYTDSSDDEVSPR. A Phosphoserine; by PKD modification is found at Ser21. A phosphoserine mark is found at Ser24, Ser27, Ser30, and Ser37. The interval 91–154 is interaction with BCL2L10; that stretch reads QGEKPLAGAK…EAGVAVFAWK (64 aa). Substrate-binding residues include Thr108, Asp182, Glu207, Lys237, and Asp241. The segment at 234–401 is NAD binding; sequence SVTKQKFDNL…EGRLLNLSCS (168 aa). Residues 271–275, Glu294, and Asn329 contribute to the NAD(+) site; that span reads GYGEV. Position 344 is a phosphoserine (Ser344). 350–352 is an NAD(+) binding site; that stretch reads MGH. The PDZ-binding stretch occupies residues 473–483; the sequence is NGPFKPNYYRY.

Belongs to the adenosylhomocysteinase family. Forms multimers. Forms heteromultimers with AHCYL2 (via the C-terminal region). Interacts (when phosphorylated) with ITPR1 (when not phosphorylated); the interaction suppresses inositol 1,4,5-trisphosphate binding to ITPR1. Interacts with BCL2L10; this strengthens the interaction of AHCYL1 with ITPR1. Interacts with CFTR and SLC26A6; the interactions take place once AHCYL1 is released from ITPR1 and increase CFTR and SLC26A6 activities. Interacts with RRM1; in a phosphorylation- and (dATP)-dependent manner. Interacts (via PEST domain when phosphorylated) with SLC4A4 isoform 1 but not isoform 2; the interaction increases SLC4A4 isoform 1 activity. Interacts (when phosphorylated) with SLC9A3; the interaction is required for SLC9A3 apical location and activity. Interacts (when phosphorylated) with FIP1L1; the interaction is direct and associates AHCYL1 with the CPSF complex and RNA. Interacts with PAPOLA. Interacts with ZCCHC4. Interacts with AHCY. Requires NAD(+) as cofactor. In terms of processing, phosphorylated at Ser/Thr residues between Ser-21 and Thr-25 in the PEST region: required for interaction with dATP-bound RRM1 and ITPR1. Phosphorylation at Ser-21 by PRKD1 and CAMK4 is required for further phosphorylations by CSNK1A1. Phosphorylation is induced by oxidative stress. Probably phosphorylated by CAMK2A; phosphorylation at Ser-21 may be required for interaction with SLC9A3. Dephosphorylated in response to apoptotic stress conditions which causes translocation of both AHCYL1 and BCL2L10 from mitochondria-associated endoplasmic reticulum membranes and promotes apoptosis. In terms of tissue distribution, expressed in kidney proximal tubules and outer medulla (at protein level).

The protein localises to the endoplasmic reticulum. Its subcellular location is the cytoplasm. It localises to the cytosol. It is found in the apical cell membrane. The protein resides in the microsome. In terms of biological role, multifaceted cellular regulator which coordinates several essential cellular functions including regulation of epithelial HCO3(-) and fluid secretion, mRNA processing and DNA replication. Regulates ITPR1 sensitivity to inositol 1,4,5-trisphosphate, competing for the common binding site and acting as endogenous 'pseudoligand' whose inhibitory activity can be modulated by its phosphorylation status. Promotes the formation of contact points between the endoplasmic reticulum (ER) and mitochondria, facilitating transfer of Ca(2+) from the ER to mitochondria. Under normal cellular conditions, functions cooperatively with BCL2L10 to limit ITPR1-mediated Ca(2+) release but, under apoptotic stress conditions, dephosphorylated which promotes dissociation of both AHCYL1 and BCL2L10 from mitochondria-associated endoplasmic reticulum membranes, inhibits BCL2L10 interaction with ITPR1 and leads to increased Ca(2+) transfer to mitochondria which promotes apoptosis. In the pancreatic and salivary ducts, at resting state, attenuates inositol 1,4,5-trisphosphate-induced calcium release by interacting with ITPR1. When extracellular stimuli induce ITPR1 phosphorylation or inositol 1,4,5-trisphosphate production, dissociates from ITPR1 to interact with CFTR and SLC26A6, mediating their synergistic activation by calcium and cAMP that stimulates the epithelial secretion of electrolytes and fluid. Also activates basolateral SLC4A4 isoform 1 to coordinate fluid and HCO3(-) secretion. Inhibits the effect of STK39 on SLC4A4 and CFTR by recruiting PP1 phosphatase which activates SLC4A4, SLC26A6 and CFTR through dephosphorylation. Mediates the induction of SLC9A3 surface expression produced by Angiotensin-2. Depending on the cell type, activates SLC9A3 in response to calcium or reverses SLC9A3R2-dependent calcium inhibition. May modulate the polyadenylation state of specific mRNAs, both by controlling the subcellular location of FIP1L1 and by inhibiting PAPOLA activity, in response to a stimulus that alters its phosphorylation state. Acts as a (dATP)-dependent inhibitor of ribonucleotide reductase large subunit RRM1, controlling the endogenous dNTP pool and ensuring normal cell cycle progression. In vitro does not exhibit any S-adenosyl-L-homocysteine hydrolase activity. In Rattus norvegicus (Rat), this protein is S-adenosylhomocysteine hydrolase-like protein 1.